A 533-amino-acid polypeptide reads, in one-letter code: MARARRVKRASVTDIYRGCKQAGTCPPDVLNKVEQTTIADKILKYGSAAVFFGGLGIGTGRGSGGATGYVPLGEGPGVRVGGTPTIVRPGVTPELIGPADVIPIDTVTPIDPAAPSIVTITDSSAVDLLPELETIAEIHPVPTDNVDIDTPVVTGGRDSSAILEVADPSPPVRTRVSRTQYHNPSFQIITESTPLSGESALADHVIVFEGSGGQNIGGSRSAALDAAQESFEMQTWPSRYSFEIQEGTPPRSSTPVQRAVQSLSSLRRALYNRRLTEQVAVTDPLFLGRPSRLVQFQFDNPTFEEEVTQTFERDVEAFEEPPDRQFLDVVRLGRPTYSETPQGYVRVSRLGRRATIRTRSGAQVGAQVHFYRDLSTIDSEALEMQLLGEHSGDSTIVQAPMESSFIDINIDEPDSLHVGLQDSTEADDIDYNSADLLLEDNIEDFSGSHLVFGNTRRSTTTYTVPRFESPRNTGFYIQDVHGYNVAYPESRDTTEIILPQSDTPTVVINFEEAGGDYYLHPSLKTRKRKRKYL.

Positions 1–10 (MARARRVKRA) match the Nuclear localization signal motif. A disulfide bridge connects residues cysteine 19 and cysteine 25. The short motif at 525–532 (TRKRKRKY) is the Nuclear localization signal element.

This sequence belongs to the papillomaviridae L2 protein family. Interacts with major capsid protein L1. Interacts with E2; this interaction inhibits E2 transcriptional activity but not the DNA replication function E2. Interacts with host GADD45GIP1. Interacts with host HSPA8; this interaction is required for L2 nuclear translocation. Interacts with host importins KPNB2 and KPNB3. Forms a complex with importin alpha2-beta1 heterodimers via interaction with the importin alpha2 adapter. Interacts with host DYNLT1; this interaction is essential for virus intracellular transport during entry. Interacts (via C-terminus) with host retromer subunits VPS35 and VPS29. Post-translationally, highly phosphorylated.

The protein localises to the virion. It localises to the host nucleus. It is found in the host early endosome. Its subcellular location is the host Golgi apparatus. In terms of biological role, minor protein of the capsid that localizes along the inner surface of the virion, within the central cavities beneath the L1 pentamers. Plays a role in capsid stabilization through interaction with the major capsid protein L1. Once the virion enters the host cell, L2 escorts the genomic DNA into the nucleus by promoting escape from the endosomal compartments and traffic through the host Golgi network. Mechanistically, the C-terminus of L2 possesses a cell-penetrating peptide that protudes from the host endosome, interacts with host cytoplasmic retromer cargo and thereby mediates the capsid delivery to the host trans-Golgi network. Plays a role through its interaction with host dynein in the intracellular microtubule-dependent transport of viral capsid toward the nucleus. Mediates the viral genome import into the nucleus through binding to host importins. Once within the nucleus, L2 localizes viral genomes to host PML bodies in order to activate early gene expression for establishment of infection. Later on, promotes late gene expression by interacting with the viral E2 protein and by inhibiting its transcriptional activation functions. During virion assembly, encapsidates the genome by direct interaction with the viral DNA. This is Minor capsid protein L2 from Homo sapiens (Human).